A 361-amino-acid chain; its full sequence is UDP-D-xylose:L-fucose alpha-1,3-D-xylosyltransferase 1 (361 aa).

The segment at 1-21 (MEQKQHILKQSTFSSSPSSYS) is disordered. At 1 to 34 (MEQKQHILKQSTFSSSPSSYSSISDRPISLLSRN) the chain is on the cytoplasmic side. A compositionally biased stretch (low complexity) spans 11-21 (STFSSSPSSYS). A helical; Signal-anchor for type II membrane protein transmembrane segment spans residues 35–55 (GLLLLLLALVLLLGVLLPWPG). Over 56-361 (SPLFLFPNRL…ALESPLGKLE (306 aa)) the chain is Lumenal. Residues Asn-92 and Asn-167 are each glycosylated (N-linked (GlcNAc...) asparagine). A DXD motif motif is present at residues 190–192 (DVD). Residues Asn-222 and Asn-286 are each glycosylated (N-linked (GlcNAc...) asparagine).

Belongs to the glycosyltransferase 77 family. Requires Mn(2+) as cofactor. Mg(2+) is required as a cofactor. In terms of processing, glycosylated. As to expression, expressed in roots, rosette leaves, cauline leaves and stems.

The protein localises to the golgi apparatus membrane. Catalyzes the transfer of D-xylose from UDP-alpha-D-xylose onto L-fucose. Probably involved in the biosynthesis of rhamnogalacturonan II (RG-II) through xylosylation of the internal fucose moiety of the A-chain of RG-II, a structurally complex pectic polysaccharide of the primary cell wall. RG-II is essential for the cell wall integrity of rapidly growing tissues such as roots and pollen tube growth and elongation. The protein is UDP-D-xylose:L-fucose alpha-1,3-D-xylosyltransferase 1 of Arabidopsis thaliana (Mouse-ear cress).